Here is a 330-residue protein sequence, read N- to C-terminus: Chromatin modification-related protein EAF3 (330 aa).

The 58-residue stretch at 5–62 (DGEKVLCFHGPLIYAAKILKAEKWTGEENVTGQVGPHYLVHYDGWKKTWDEWVPETRL) folds into the Tudor-knot domain. A disordered region spans residues 96-129 (TSAASSLKRAKDSELPDRKSASRGTKRSREHVEA). A compositionally biased stretch (basic and acidic residues) spans 104–115 (RAKDSELPDRKS). Residues 135 to 329 (KRPEVKISLP…ASPAYHRISS (195 aa)) form the MRG domain.

It belongs to the MRG family. As to quaternary structure, component of the NuA4 histone acetyltransferase complex.

The protein resides in the nucleus. In terms of biological role, involved in deacetylation of histones, chromatin assembly and chromosome segregation. May act as a transcriptional oscillator, directing histone deacetylases to specific chromosomal domains. Component of the NuA4 histone acetyltransferase complex which is involved in transcriptional activation of selected genes principally by acetylation of nucleosomal histone H4 and H2A. The NuA4 complex is also involved in DNA repair. In Mycosarcoma maydis (Corn smut fungus), this protein is Chromatin modification-related protein EAF3 (EAF3).